The following is an 846-amino-acid chain: MQERYDYQQIEKKWQKYWADTGMFRLQQEEGRPKYYCLEMFPYPSGNLHMGHVRVYSIGDVVARFKTMQGYNVLHPMGWDAFGLPAENAAIKHKVPPADWTWSNIANMRRQLQSMGISYDWEREVATCHPDYYKWTQWLFLQLYKAGLAYKKKANVNWCPDCATVLANEQVVDGLCERCDATVEKKALEQWFFRITDYAQRLLDDLNKLPGWPDKVKTMQENWIGRSEGVEADFALENPVGGVDKLTVYTTRQDTIFGVTYMVLAPEHPAVEALVSGNPREAELRAFIKKVLSQSEIDRTANDTEKEGIFTGHYCINPLTGEKVAVYLANYVLVDYGTGAVMGVPAHDQRDFEFATKYNIPMKVVIQPEGLPDLDVEEMDHAYEGEGRLVNSGEFDGLINTQALDVIADKLEREGKGVRKVNYRLRDWLISRQRYWGAPIPVIYCEKCGEVAVPDEQLPVMLPTDVAFTPSGESPLTSRPDFYECTCPRCGGKGRRETDTMDTFVCSSWYFLRYCTPKDKDHAFLQEDVDYWMNVDQYIGGVEHAILHLMYARFFTKVLYDLKLVKVEEPFENLLTQGMVLMGGSKMSKSKGNTVSPEEIIAKYGADTARLFILFAAPPERDLEWSDRGVEGAHRFLHRLWRLVYAYSDQIASVPGTMVGYGKGQPNGSKGDNLFSLNSDDRELVRVAHYTVKKVTEDIGQRFNFNTAVSAIMEMVNYFYQYKDKVPAEQQNIPLVKDALARLVLVLAPFAPHICEELWQVIGGGESVYKQPWPTYDEQALVRDEVEVVVQINGKVREKLRVANGLDGEAIKAKVLEMDKVQALIAGKSVVKLITVPNKLVNIVVK.

Residues 42–52 carry the 'HIGH' region motif; it reads PYPSGNLHMGH. The short motif at 586-590 is the 'KMSKS' region element; it reads KMSKS. ATP is bound at residue K589.

It belongs to the class-I aminoacyl-tRNA synthetase family.

Its subcellular location is the cytoplasm. It carries out the reaction tRNA(Leu) + L-leucine + ATP = L-leucyl-tRNA(Leu) + AMP + diphosphate. This Heliobacterium modesticaldum (strain ATCC 51547 / Ice1) protein is Leucine--tRNA ligase.